The chain runs to 575 residues: V-type ATP synthase alpha chain (575 aa).

238–245 (GPFGAGKT) provides a ligand contact to ATP.

This sequence belongs to the ATPase alpha/beta chains family.

It carries out the reaction ATP + H2O + 4 H(+)(in) = ADP + phosphate + 5 H(+)(out). Its function is as follows. Produces ATP from ADP in the presence of a proton gradient across the membrane. The V-type alpha chain is a catalytic subunit. The chain is V-type ATP synthase alpha chain from Borrelia garinii subsp. bavariensis (strain ATCC BAA-2496 / DSM 23469 / PBi) (Borreliella bavariensis).